We begin with the raw amino-acid sequence, 499 residues long: Glycerol kinase (499 aa).

Thr13 lines the ADP pocket. Residues Thr13, Thr14, and Ser15 each coordinate ATP. Thr13 serves as a coordination point for sn-glycerol 3-phosphate. Arg17 contributes to the ADP binding site. Sn-glycerol 3-phosphate contacts are provided by Arg83, Glu84, Tyr135, and Asp245. Arg83, Glu84, Tyr135, Asp245, and Gln246 together coordinate glycerol. Residues Thr267 and Gly310 each coordinate ADP. 4 residues coordinate ATP: Thr267, Gly310, Gln314, and Ala411. ADP is bound by residues Ala411 and Asn415.

The protein belongs to the FGGY kinase family.

The enzyme catalyses glycerol + ATP = sn-glycerol 3-phosphate + ADP + H(+). It participates in polyol metabolism; glycerol degradation via glycerol kinase pathway; sn-glycerol 3-phosphate from glycerol: step 1/1. With respect to regulation, inhibited by fructose 1,6-bisphosphate (FBP). In terms of biological role, key enzyme in the regulation of glycerol uptake and metabolism. Catalyzes the phosphorylation of glycerol to yield sn-glycerol 3-phosphate. This Xylella fastidiosa (strain M12) protein is Glycerol kinase.